Reading from the N-terminus, the 218-residue chain is Outer-membrane lipoprotein LolB (218 aa).

An N-terminal signal peptide occupies residues 1–24 (MNNLSYLTKIPLIWVLLSVTLLSA). Cys25 carries N-palmitoyl cysteine lipidation. The S-diacylglycerol cysteine moiety is linked to residue Cys25.

This sequence belongs to the LolB family. Monomer.

Its subcellular location is the cell outer membrane. Plays a critical role in the incorporation of lipoproteins in the outer membrane after they are released by the LolA protein. The chain is Outer-membrane lipoprotein LolB from Shewanella sediminis (strain HAW-EB3).